Consider the following 110-residue polypeptide: Proline-rich protein 15-like protein A (110 aa).

Disordered stretches follow at residues 29 to 51 (IAGD…TDSQ) and 65 to 110 (TKGR…KSGK). Positions 65 to 85 (TKGRHVKVSHSGRFKEKKRIR) are enriched in basic residues. The segment covering 100–110 (TTANENNKSGK) has biased composition (polar residues).

This sequence belongs to the PRR15 family.

This chain is Proline-rich protein 15-like protein A (prr15la), found in Danio rerio (Zebrafish).